Here is a 269-residue protein sequence, read N- to C-terminus: Putative esterase/lipase 1 (269 aa).

Residue His27 is part of the active site. Residue Ser94 is the Charge relay system of the active site.

Belongs to the lipase/esterase LIP3/BchO family.

The protein is Putative esterase/lipase 1 of Mycoplasma pneumoniae (strain ATCC 29342 / M129 / Subtype 1) (Mycoplasmoides pneumoniae).